The primary structure comprises 1241 residues: MAAQLEQFLVNEGQVDQRAVTYMLKGLQLESLSDFASFWTSKDYENGVRDDIISKVAPFNSDLSLPAAKLQVARLRAAWRKAQGKPSAAVPLQSAKPVAGSVVTATKDTGFCEKTGLESGGVAHGGALNAAQVAHLDEDAFKGGLHRPKFDSEGLHKPHTSGGKTYETGFHYLLEAHELGGKNADGGFGGPLCADPFSPEIEQLCQALVREAQDDKTLCFENFTKPCPQLTKKQVELCKGFDYGDKTLKLPCGPLPWPAGLPEPGYVPKTNPLHGRWITVSGGQAAFIKEAIKAGMLGAAESHKIMADTDHHQTGGMYLRINQNGDVCTVDASVAKFARAKRTWKSGHYFYEPLVSGGNLLGVWVLPEEYRKIGFFWEMESGRCFRIERRAFERNGLMIMRQATEVAGKISFVFYVKVSNDPESKPIPLQSRDYTALAGLDNVPDSLGNPYTCEAKDLDYPIKRDTWLDKNQEEMLKQRSIVGTAFAKCCDQGFEAHDNPKGGALTAAHVESLGKENFKNGLHAPNFHDDGLHKPMEAGGKVYSTGFHYLLEAHDLGGKNEDGGYGGPLCKDPYGKEVQSMVENLLVQANVDTTNAFDNFKQPCPQLTKEQVAMCKGFDYGDKTLKLPCGPLPWPAGLPEPGYVPKTNPLHGRWITVSGGQVAFIKEAIKSGMLGAAEAKKIIADTDHHQTGGMYLRINQYGEVCTVDASVAKFARAKRTWKSGHYFYEPLVSGGNLLGVWVLPEEYRKIGFFWEMESGHCFRIERRAFPCGPYMFLRQATEVGGKISYVFYVKVSNDPGSKPIPLQSRDYTALAGQDNAPDNLGKPYKCTARDLDAPTKRDGWLDTNKGAMLDQREKVSKAFAKVCEKGFEAGDNKLGGALNAKHVEKYGDNFKNGMHKPEFHEDGLHKPMEVGGKKFESGFHYLLECHELGGKNASGGYGGPLCEDPYGSEVQAMTEKLLKEADSDRTLCFNNFQDPCPQLTKEQVAMCKGFDYGDKTLKLPCGPLPWPAGLPEPGYVPKTNPLHGRWITVSGGQAAFIKEAIKSGMLGAAEANKIVADTDHHQTGGMYLRINQFGDVCTVDASVAKFARAKRTWKSGHYFYEPLVSGGNLLGVWVLPEEYRKIGFFWEMESGRCFRIERRAFPVGPYTFMRQATEVGGKISFVFYVKVSNDPESDPIPLQSRDYTALAGRDNAPTNLGKPYPTLAKDLDYPKKRDGWLEKNEKEMLRQRNIVSSTFRS.

3 luciferase regions span residues 114–465 (KTGL…IKRD), 491–842 (DQGF…TKRD), and 868–1218 (EKGF…KKRD).

This sequence belongs to the calycin superfamily. Luciferase family.

Its subcellular location is the cytoplasmic vesicle. The enzyme catalyses dinoflagellate luciferin + O2 = oxidized dinoflagellate luciferin + hnu + H2O + H(+). With respect to regulation, regulated by pH: upon acidification, at a pH of 6.3, dinoflagellate luciferin is released from luciferin-binding protein LBP, allowing the interaction between Dinoflagellate luciferase and its substrate luciferin. Its function is as follows. Emits blue light flashes with a wavelength of 475 nm during the night phase. The sequence is that of Dinoflagellate luciferase from Lingulodinium polyedra (Dinoflagellate).